The chain runs to 304 residues: GDP-6-deoxy-D-mannose reductase (304 aa).

Residues 13-14 (FV) and 39-40 (DL) contribute to the NADP(+) site. 105-106 (SG) lines the substrate pocket. Tyr131 provides a ligand contact to NADP(+). Residues Asn160, Arg200, and 260-263 (RRAE) each bind substrate.

It belongs to the NAD(P)-dependent epimerase/dehydratase family. GDP-6-deoxy-D-mannose reductase subfamily.

It catalyses the reaction GDP-alpha-D-rhamnose + NAD(+) = GDP-4-dehydro-alpha-D-rhamnose + NADH + H(+). The enzyme catalyses GDP-alpha-D-rhamnose + NADP(+) = GDP-4-dehydro-alpha-D-rhamnose + NADPH + H(+). Reductase that catalyzes the conversion of GDP-6-deoxy-D-mannose to GDP-4-dehydro-6-deoxy-D-mannose (GDP-D-rhamnose). The sequence is that of GDP-6-deoxy-D-mannose reductase (rmd) from Pseudomonas aeruginosa (strain ATCC 15692 / DSM 22644 / CIP 104116 / JCM 14847 / LMG 12228 / 1C / PRS 101 / PAO1).